A 47-amino-acid polypeptide reads, in one-letter code: Photosystem II reaction center protein K (47 aa).

Positions M1–A10 are excised as a propeptide. Residues F19–V39 traverse the membrane as a helical segment.

This sequence belongs to the PsbK family. In terms of assembly, PSII is composed of 1 copy each of membrane proteins PsbA, PsbB, PsbC, PsbD, PsbE, PsbF, PsbH, PsbI, PsbJ, PsbK, PsbL, PsbM, PsbT, PsbX, PsbY, PsbZ, Psb30/Ycf12, peripheral proteins PsbO, CyanoQ (PsbQ), PsbU, PsbV and a large number of cofactors. It forms dimeric complexes.

It is found in the cellular thylakoid membrane. Functionally, one of the components of the core complex of photosystem II (PSII). PSII is a light-driven water:plastoquinone oxidoreductase that uses light energy to abstract electrons from H(2)O, generating O(2) and a proton gradient subsequently used for ATP formation. It consists of a core antenna complex that captures photons, and an electron transfer chain that converts photonic excitation into a charge separation. The protein is Photosystem II reaction center protein K of Synechococcus sp. (strain CC9311).